An 807-amino-acid chain; its full sequence is Putative AC transposase (807 aa).

Disordered regions lie at residues 42-140 and 785-807; these read GLKR…KKCT and MDED…GSSP. The segment covering 84–98 has biased composition (polar residues); sequence QSVSSSNANGTATDP. Tandem repeats lie at residues 109–110, 111–112, 113–114, 115–116, 117–118, 119–120, 121–122, 123–124, 125–126, and 127–128. A 10 X 2 AA tandem repeats of P-[QE] region spans residues 109–128; it reads PQPQPQPQPEPQPQPQPEPE. Residues 110-125 are compositionally biased toward pro residues; that stretch reads QPQPQPQPEPQPQPQP.

The chain is Putative AC transposase from Zea mays (Maize).